The following is a 73-amino-acid chain: uncharacterized protein (73 aa).

2 consecutive transmembrane segments (helical) span residues 7–27 (LFSS…IPNL) and 47–67 (YFGY…IIIL).

It is found in the cell membrane. This is an uncharacterized protein from Methanocaldococcus jannaschii (strain ATCC 43067 / DSM 2661 / JAL-1 / JCM 10045 / NBRC 100440) (Methanococcus jannaschii).